The sequence spans 403 residues: Prostaglandin E2 receptor EP1 subtype (403 aa).

Residues 1 to 38 (MSLCGPLNLSLAGEATPCAEPGAPNASAWPPSGRASAS) are Extracellular-facing. N-linked (GlcNAc...) asparagine glycans are attached at residues Asn8 and Asn25. Residues 39-65 (PALPIFSMTLGAVSNVLALALLAQAAG) form a helical membrane-spanning segment. Residues 66–75 (RLRRRRSAAT) are Cytoplasmic-facing. The helical transmembrane segment at 76 to 99 (FLLFVASLLATDLAGHVIPGALVL) threads the bilayer. Topologically, residues 100–114 (RLYAAGRSPAGGACH) are extracellular. A disulfide bond links Cys113 and Cys191. Residues 115–136 (FLGGCMVFFGLCPLLLGCGMAV) traverse the membrane as a helical segment. The Cytoplasmic portion of the chain corresponds to 137-158 (ERCVGVTRPLLHAARVSAARAR). The helical transmembrane segment at 159-180 (LALAVLAALALAVALLPLARVG) threads the bilayer. Residues 181-204 (RYELQYPGTWCFIGLRPAGGWRQA) lie on the Extracellular side of the membrane. A helical membrane pass occupies residues 205 to 230 (LLAGLFAGLGLAALLAALVCNTLSGL). At 231 to 295 (ALLRARWRRR…ARRARAHDVE (65 aa)) the chain is on the cytoplasmic side. Residues 243 to 287 (RRRPQACGPDGRRHWGARAPRSASASSSSSVASVPGGSPGRGSAR) form a disordered region. Residues 259 to 278 (ARAPRSASASSSSSVASVPG) show a composition bias toward low complexity. A helical transmembrane segment spans residues 296–322 (MVGQLVGIMVVSCICWSPLLVLVVLAV). The Extracellular segment spans residues 323 to 333 (GGWGSSSLQRP). The helical transmembrane segment at 334–355 (LFLAVRLASWNQILDPWVYILL) threads the bilayer. The Cytoplasmic segment spans residues 356–403 (RQAVLRQLLRLLPPRPGAKGSPAGLALTRSAWEASSLRSSRHSSLSHL).

It belongs to the G-protein coupled receptor 1 family.

The protein localises to the cell membrane. Receptor for prostaglandin E2 (PGE2). The activity of this receptor is mediated by G(q) proteins which activate a phosphatidylinositol-calcium second messenger system. May play a role as an important modulator of renal function. Implicated the smooth muscle contractile response to PGE2 in various tissues. The protein is Prostaglandin E2 receptor EP1 subtype (PTGER1) of Canis lupus familiaris (Dog).